We begin with the raw amino-acid sequence, 166 residues long: Small ribosomal subunit protein uS5 (166 aa).

The S5 DRBM domain maps to 11–74 (LQEKLIAVNR…EKARRNMINV (64 aa)).

The protein belongs to the universal ribosomal protein uS5 family. Part of the 30S ribosomal subunit. Contacts proteins S4 and S8.

Its function is as follows. With S4 and S12 plays an important role in translational accuracy. Located at the back of the 30S subunit body where it stabilizes the conformation of the head with respect to the body. This chain is Small ribosomal subunit protein uS5, found in Pasteurella multocida (strain Pm70).